A 274-amino-acid polypeptide reads, in one-letter code: ATP synthase subunit delta (274 aa).

This sequence belongs to the ATPase delta chain family. F-type ATPases have 2 components, F(1) - the catalytic core - and F(0) - the membrane proton channel. F(1) has five subunits: alpha(3), beta(3), gamma(1), delta(1), epsilon(1). F(0) has three main subunits: a(1), b(2) and c(10-14). The alpha and beta chains form an alternating ring which encloses part of the gamma chain. F(1) is attached to F(0) by a central stalk formed by the gamma and epsilon chains, while a peripheral stalk is formed by the delta and b chains.

It localises to the cell membrane. Functionally, f(1)F(0) ATP synthase produces ATP from ADP in the presence of a proton or sodium gradient. F-type ATPases consist of two structural domains, F(1) containing the extramembraneous catalytic core and F(0) containing the membrane proton channel, linked together by a central stalk and a peripheral stalk. During catalysis, ATP synthesis in the catalytic domain of F(1) is coupled via a rotary mechanism of the central stalk subunits to proton translocation. In terms of biological role, this protein is part of the stalk that links CF(0) to CF(1). It either transmits conformational changes from CF(0) to CF(1) or is implicated in proton conduction. The polypeptide is ATP synthase subunit delta (Salinispora arenicola (strain CNS-205)).